The sequence spans 548 residues: Glucose-6-phosphate isomerase (548 aa).

The active-site Proton donor is E355. Active-site residues include H386 and K514.

The protein belongs to the GPI family.

The protein resides in the cytoplasm. The enzyme catalyses alpha-D-glucose 6-phosphate = beta-D-fructose 6-phosphate. The protein operates within carbohydrate biosynthesis; gluconeogenesis. It functions in the pathway carbohydrate degradation; glycolysis; D-glyceraldehyde 3-phosphate and glycerone phosphate from D-glucose: step 2/4. Catalyzes the reversible isomerization of glucose-6-phosphate to fructose-6-phosphate. In Yersinia pestis (strain Pestoides F), this protein is Glucose-6-phosphate isomerase.